Here is a 121-residue protein sequence, read N- to C-terminus: MKMVSSSRLRCLLVLLLSLTASISCSFAGQRDSKLRLLLHRYPLQGSKQDMTRSALAELLLSDLLQGENEALEEENFPLAEGGPEDAHADLERAASGGPLLAPRERKAGCKNFFWKTFTSC.

Positions 1 to 24 (MKMVSSSRLRCLLVLLLSLTASIS) are cleaved as a signal peptide. A propeptide spanning residues 25 to 105 (CSFAGQRDSK…SGGPLLAPRE (81 aa)) is cleaved from the precursor. Residues 76–99 (NFPLAEGGPEDAHADLERAASGGP) form a disordered region. Cysteine 110 and cysteine 121 are disulfide-bonded.

Belongs to the somatostatin family.

It is found in the secreted. In terms of biological role, somatostatin inhibits the release of somatotropin. This chain is Somatostatin-1 (sst1), found in Lophius americanus (American angler).